A 624-amino-acid chain; its full sequence is Phosphoenolpyruvate carboxykinase (ATP) 1 (624 aa).

The interval 1 to 22 is disordered; sequence MASPNGGVTTYDYDDSDSAAPV. Position 322-329 (322-329) interacts with ATP; the sequence is GLSGTGKT.

The protein belongs to the phosphoenolpyruvate carboxykinase (ATP) family. Homohexamer. In terms of tissue distribution, green leaves but not in roots or etiolated shoots.

It localises to the cytoplasm. The catalysed reaction is oxaloacetate + ATP = phosphoenolpyruvate + ADP + CO2. The protein operates within carbohydrate biosynthesis; gluconeogenesis. This chain is Phosphoenolpyruvate carboxykinase (ATP) 1 (PCK1), found in Urochloa panicoides (Panic liverseed grass).